The primary structure comprises 138 residues: ATP synthase epsilon chain (138 aa).

It belongs to the ATPase epsilon chain family. As to quaternary structure, F-type ATPases have 2 components, CF(1) - the catalytic core - and CF(0) - the membrane proton channel. CF(1) has five subunits: alpha(3), beta(3), gamma(1), delta(1), epsilon(1). CF(0) has three main subunits: a, b and c.

The protein localises to the cell inner membrane. Its function is as follows. Produces ATP from ADP in the presence of a proton gradient across the membrane. This chain is ATP synthase epsilon chain, found in Psychrobacter arcticus (strain DSM 17307 / VKM B-2377 / 273-4).